A 277-amino-acid chain; its full sequence is Ethanolamine ammonia-lyase small subunit (277 aa).

Adenosylcob(III)alamin-binding residues include Val-164, Glu-185, and Cys-214.

The protein belongs to the EutC family. The basic unit is a heterodimer which dimerizes to form tetramers. The heterotetramers trimerize; 6 large subunits form a core ring with 6 small subunits projecting outwards. Adenosylcob(III)alamin is required as a cofactor.

Its subcellular location is the bacterial microcompartment. The catalysed reaction is ethanolamine = acetaldehyde + NH4(+). It functions in the pathway amine and polyamine degradation; ethanolamine degradation. In terms of biological role, catalyzes the deamination of various vicinal amino-alcohols to oxo compounds. Allows this organism to utilize ethanolamine as the sole source of nitrogen and carbon in the presence of external vitamin B12. This is Ethanolamine ammonia-lyase small subunit from Pseudomonas fluorescens (strain SBW25).